Here is a 102-residue protein sequence, read N- to C-terminus: Methane monooxygenase component D (102 aa).

The soluble methane monooxygenase (sMMO) consists of four components A/MMOH (composed of alpha/MmoX, beta/MmoY and gamma/MmoZ), B/MMOB (MmoB), C/MMOR (MmoC) and D/MMOD (MmoD).

This chain is Methane monooxygenase component D (mmoD), found in Methylosinus trichosporium.